The chain runs to 315 residues: Secreted mono- and diacylglycerol lipase LIP2 (315 aa).

Positions 1–21 are cleaved as a signal peptide; the sequence is MACFRVILYLSVIFFVQCVFA. A disulfide bond links C68 and C308. N74 carries an N-linked (GlcNAc...) asparagine glycan. Catalysis depends on S182, which acts as the Nucleophile. D240 is a catalytic residue. N-linked (GlcNAc...) asparagine glycosylation is present at N265. H292 is an active-site residue.

It belongs to the AB hydrolase superfamily. Lipase family. Class 3 subfamily.

It localises to the secreted. The enzyme catalyses a monoacylglycerol + H2O = glycerol + a fatty acid + H(+). It catalyses the reaction a diacylglycerol + H2O = a monoacylglycerol + a fatty acid + H(+). Functionally, secreted lipase involved in Dandruff and seborrheic dermatitis (D/SD) probably via lipase-mediated breakdown of sebaceous lipids and release of irritating free fatty acids. Shows activity against monoglyceride and diglyceride substrates and generates free oleic acid from the substrates mono- and diolein. Able to cleave the oleic acid from both the 1 and the 2 position of the glycerol backbone as 1,2 isomers of diolein were converted into oleic acid and glycerol. Due to an absence of fatty acid synthase genes in Malassezia species, secretory lipases are essential for the yeast to generate free fatty acids from degradation of sebum and assimilate them as lipid sources for growth. Plays an essential role at the pathogen-host interface during disease progression. Also performs the reverse reaction to build diacylglycerols from monoacylglycerols. The chain is Secreted mono- and diacylglycerol lipase LIP2 from Malassezia restricta (Seborrheic dermatitis infection agent).